Reading from the N-terminus, the 196-residue chain is Small ribosomal subunit protein uS4c (196 aa).

The segment at 16-40 (GALPGLTRKTPKSGSNLKKKFHSGK) is disordered. In terms of domain architecture, S4 RNA-binding spans 89–152 (MRLDNTLFRL…RSKDLVRNSI (64 aa)).

It belongs to the universal ribosomal protein uS4 family. As to quaternary structure, part of the 30S ribosomal subunit. Contacts protein S5. The interaction surface between S4 and S5 is involved in control of translational fidelity.

It is found in the plastid. It localises to the chloroplast. One of the primary rRNA binding proteins, it binds directly to 16S rRNA where it nucleates assembly of the body of the 30S subunit. In terms of biological role, with S5 and S12 plays an important role in translational accuracy. This chain is Small ribosomal subunit protein uS4c (rps4), found in Anthoxanthum odoratum (Sweet vernal grass).